Reading from the N-terminus, the 186-residue chain is MKILAGVDEVGRGSLIGPVYAAAVILNNSIDKKLLKDSKTLTKDKREELEKYIKKNSIWAIGQASTKEIEKINILHASLLAMKRAILKLKIKPSLVLIDGNKLPDLKNYKLEYVIKGDQKIPSISAASIIAKVSRDKFITKLSKEFNNYGWDTNSGYGTKEHLKAIKQFGITKYHRKTFSPISDLL.

Positions 2-186 (KILAGVDEVG…KTFSPISDLL (185 aa)) constitute an RNase H type-2 domain. A divalent metal cation is bound by residues Asp8, Glu9, and Asp99.

Belongs to the RNase HII family. Mn(2+) serves as cofactor. Requires Mg(2+) as cofactor.

Its subcellular location is the cytoplasm. The enzyme catalyses Endonucleolytic cleavage to 5'-phosphomonoester.. Functionally, endonuclease that specifically degrades the RNA of RNA-DNA hybrids. The chain is Ribonuclease HII from Pelagibacter ubique (strain HTCC1062).